The primary structure comprises 194 residues: Fe/S biogenesis protein NfuA (194 aa).

[4Fe-4S] cluster-binding residues include C152 and C155.

Belongs to the NfuA family. Homodimer. [4Fe-4S] cluster serves as cofactor.

Its function is as follows. Involved in iron-sulfur cluster biogenesis. Binds a 4Fe-4S cluster, can transfer this cluster to apoproteins, and thereby intervenes in the maturation of Fe/S proteins. Could also act as a scaffold/chaperone for damaged Fe/S proteins. The protein is Fe/S biogenesis protein NfuA of Pseudomonas aeruginosa (strain LESB58).